Consider the following 94-residue polypeptide: MLQSNEYFSGKVKSIGFTSSSTGRASVGVMAEGEYTFGTAEPEEMTVVSGALKVLLPGTVEWKVYAAGEVFNVPGHSEFHLQVAEPTSYLCRYL.

The protein belongs to the nucleoside phosphorylase PpnP family.

It carries out the reaction a purine D-ribonucleoside + phosphate = a purine nucleobase + alpha-D-ribose 1-phosphate. The enzyme catalyses adenosine + phosphate = alpha-D-ribose 1-phosphate + adenine. It catalyses the reaction cytidine + phosphate = cytosine + alpha-D-ribose 1-phosphate. The catalysed reaction is guanosine + phosphate = alpha-D-ribose 1-phosphate + guanine. It carries out the reaction inosine + phosphate = alpha-D-ribose 1-phosphate + hypoxanthine. The enzyme catalyses thymidine + phosphate = 2-deoxy-alpha-D-ribose 1-phosphate + thymine. It catalyses the reaction uridine + phosphate = alpha-D-ribose 1-phosphate + uracil. The catalysed reaction is xanthosine + phosphate = alpha-D-ribose 1-phosphate + xanthine. Its function is as follows. Catalyzes the phosphorolysis of diverse nucleosides, yielding D-ribose 1-phosphate and the respective free bases. Can use uridine, adenosine, guanosine, cytidine, thymidine, inosine and xanthosine as substrates. Also catalyzes the reverse reactions. This is Pyrimidine/purine nucleoside phosphorylase from Salmonella heidelberg (strain SL476).